Reading from the N-terminus, the 267-residue chain is Hydrolase FUB4 (267 aa).

Catalysis depends on charge relay system residues S93, D183, and H243.

The protein belongs to the AB hydrolase 3 family.

It functions in the pathway mycotoxin biosynthesis. Hydrolase; part of the gene cluster that mediates the biosynthesis of fusaric acid, a mycotoxin with low to moderate toxicity to animals and humans, but with high phytotoxic properties. L-aspartate is suggested as fusaric acid amino acid precursor that is activated and further processed to O-acetyl-L-homoserine by cluster enzymes aspartate kinase FUB3 and homoserine O-acetyltransferase FUB5, as well as enzymes of the primary metabolism. The polyketide synthase (PKS) FUB1 generates the triketide trans-2-hexenal which is presumptively released by the hydrolase FUB4 and linked to the NRPS-bound amino acid precursor by NAD(P)-dependent dehydrogenase FUB6. FUB1, FUB4, and the non-canonical NRPS Fub8 may form an enzyme complex. Further processing of the NRPS-bound intermediate might be carried out by FUB6 and the sulfhydrylase FUB7, enabling a spontaneous electrocyclization to close the carbon backbone of fusaric acid. Dihydrofusaric acid is likely to be released via reduction by the thioester reductase (TR) domain of FUB8 whereupon the final oxidation to fusaric acid may (also) be performed by the FMN-dependent dehydrogenase FUB9. This chain is Hydrolase FUB4, found in Fusarium oxysporum f. sp. lycopersici (strain 4287 / CBS 123668 / FGSC 9935 / NRRL 34936) (Fusarium vascular wilt of tomato).